The following is a 435-amino-acid chain: RuBisCO large subunit-binding protein subunit beta-1 (435 aa).

Belongs to the chaperonin (HSP60) family. Oligomer of probably six alpha and six beta subunits.

It localises to the plastid. Its subcellular location is the chloroplast. Functionally, this protein binds RuBisCO small and large subunits and is implicated in the assembly of the enzyme oligomer. This is RuBisCO large subunit-binding protein subunit beta-1 from Chlamydomonas reinhardtii (Chlamydomonas smithii).